The following is a 228-amino-acid chain: Glucose-induced degradation protein 8-A homolog (228 aa).

The region spanning 25 to 57 (QRADMNRLIMNYLVTEGFKEAAEKFRMESGIEP) is the LisH domain. One can recognise a CTLH domain in the interval 63 to 120 (SLDERIKIREMVLKGQIQEAIALINSLHPELLDTNRYLYFHLQQQHLIELIRLRETEA).

Belongs to the GID8 family. In terms of assembly, identified in the CTLH complex that contains at least MAEA, RMND5A (or alternatively its paralog RMND5B), GID8, WDR26, and RANBP9 and/or RANBP10. Interacts with CTNNB1.

Functionally, core component of the CTLH E3 ubiquitin-protein ligase complex that selectively accepts ubiquitin from UBE2H and mediates ubiquitination and subsequent proteasomal degradation of target proteins. Acts as a positive regulator of Wnt signaling pathway by promoting beta-catenin (CTNNB1) nuclear accumulation. Required for normal Wnt signaling and normal dorsoventral patterning during embryogenesis. The chain is Glucose-induced degradation protein 8-A homolog (gid8a) from Danio rerio (Zebrafish).